Consider the following 370-residue polypeptide: Quinolinate synthase (370 aa).

Residues histidine 62 and serine 83 each coordinate iminosuccinate. Position 128 (cysteine 128) interacts with [4Fe-4S] cluster. Iminosuccinate contacts are provided by residues 154-156 (YAN) and serine 171. Residue cysteine 215 coordinates [4Fe-4S] cluster. Iminosuccinate-binding positions include 241 to 243 (HPE) and threonine 258. Cysteine 312 is a [4Fe-4S] cluster binding site.

It belongs to the quinolinate synthase family. Type 1 subfamily. The cofactor is [4Fe-4S] cluster.

The protein resides in the cytoplasm. The catalysed reaction is iminosuccinate + dihydroxyacetone phosphate = quinolinate + phosphate + 2 H2O + H(+). It participates in cofactor biosynthesis; NAD(+) biosynthesis; quinolinate from iminoaspartate: step 1/1. Catalyzes the condensation of iminoaspartate with dihydroxyacetone phosphate to form quinolinate. This Neisseria gonorrhoeae (strain ATCC 700825 / FA 1090) protein is Quinolinate synthase.